The sequence spans 400 residues: Subtilisin-like protease 7 (400 aa).

Positions 1–20 are cleaved as a signal peptide; it reads MGFITKAIPLALAAASVING. Positions 21-119 are excised as a propeptide; it reads AEILETRAGV…IERDARVQIN (99 aa). Residues 36–118 form the Inhibitor I9 domain; sequence KYIVVMNDGM…YIERDARVQI (83 aa). The Peptidase S8 domain maps to 129–400; the sequence is SWGLARVGSK…GKLINNGSGK (272 aa). Active-site charge relay system residues include D161 and H192. N252 carries an N-linked (GlcNAc...) asparagine glycan. S346 serves as the catalytic Charge relay system. N396 is a glycosylation site (N-linked (GlcNAc...) asparagine).

This sequence belongs to the peptidase S8 family.

It localises to the secreted. Secreted subtilisin-like serine protease with keratinolytic activity that contributes to pathogenicity. The chain is Subtilisin-like protease 7 (SUB7) from Arthroderma gypseum (strain ATCC MYA-4604 / CBS 118893) (Microsporum gypseum).